Consider the following 382-residue polypeptide: Glutaminyl-peptide cyclotransferase-like protein (382 aa).

A helical transmembrane segment spans residues Leu-35 to Trp-55. Residues Cys-167 and Cys-191 are joined by a disulfide bond. Residue Asp-186 coordinates Zn(2+). The Proton acceptor role is filled by Glu-225. Glu-226 serves as a coordination point for Zn(2+). The Proton acceptor role is filled by Asp-269. His-351 serves as a coordination point for Zn(2+).

It belongs to the glutaminyl-peptide cyclotransferase family.

It is found in the golgi apparatus membrane. It catalyses the reaction N-terminal L-glutaminyl-[peptide] = N-terminal 5-oxo-L-prolyl-[peptide] + NH4(+). Functionally, responsible for the biosynthesis of pyroglutamyl peptides. The polypeptide is Glutaminyl-peptide cyclotransferase-like protein (QPCTL) (Macaca fascicularis (Crab-eating macaque)).